Here is a 584-residue protein sequence, read N- to C-terminus: A-type ATP synthase subunit A (584 aa).

Residue glycine 233–threonine 240 coordinates ATP.

Belongs to the ATPase alpha/beta chains family. In terms of assembly, has multiple subunits with at least A(3), B(3), C, D, E, F, H, I and proteolipid K(x).

It localises to the cell membrane. The catalysed reaction is ATP + H2O + 4 H(+)(in) = ADP + phosphate + 5 H(+)(out). Component of the A-type ATP synthase that produces ATP from ADP in the presence of a proton gradient across the membrane. The A chain is the catalytic subunit. In Methanothermobacter thermautotrophicus (strain ATCC 29096 / DSM 1053 / JCM 10044 / NBRC 100330 / Delta H) (Methanobacterium thermoautotrophicum), this protein is A-type ATP synthase subunit A.